Consider the following 394-residue polypeptide: MAKEKFERSKPHVNVGTIGHVDHGKTTLTAALTTILAKKFGGAAKAYDQIDNAPEEKARGITINTSHVEYETETRHYAHVDCPGHADYVKNMITGAAQMDGAILVCSAADGPMPQTREHILLARQVGVPYIIVFMNKCDMVDDAELFQLVEMEIRDLLSSYDFPGDDCPIVQGSALKALEGDAAYEEKIFELATALDRYIPTPERAVDKPFLLPIEDVFSISGRGTVVTGRVERGIIHVGDEIEIVGLKETQKTTCTGVEMFRKLLDEGQAGDNVGVLLRGTKREDVERGQVLAKRGTITPHTKFKAEVYVLSKEEGGPHTPFFANYRPQFYFRTTDVTGTITLEKGVEMVMPGENVTITVELIAPIAMEEGLRFAIREGGRTVGAGVVSSVIA.

The tr-type G domain maps to Lys10–Glu204. The interval Gly19–Thr26 is G1. Gly19–Thr26 contacts GTP. Mg(2+) is bound at residue Thr26. Residues Gly60–Asn64 are G2. Residues Asp81–Gly84 are G3. Residues Asp81 to His85 and Asn136 to Asp139 each bind GTP. Positions Asn136 to Asp139 are G4. Positions Ser174–Leu176 are G5.

It belongs to the TRAFAC class translation factor GTPase superfamily. Classic translation factor GTPase family. EF-Tu/EF-1A subfamily. As to quaternary structure, monomer.

It localises to the cytoplasm. The catalysed reaction is GTP + H2O = GDP + phosphate + H(+). In terms of biological role, GTP hydrolase that promotes the GTP-dependent binding of aminoacyl-tRNA to the A-site of ribosomes during protein biosynthesis. The protein is Elongation factor Tu of Neisseria gonorrhoeae.